Consider the following 216-residue polypeptide: MOB kinase activator-like 1 homolog C (216 aa).

Cys78, Cys83, His160, and His165 together coordinate Zn(2+).

The protein belongs to the MOB1/phocein family.

This chain is MOB kinase activator-like 1 homolog C (mobC), found in Dictyostelium discoideum (Social amoeba).